The sequence spans 122 residues: Large ribosomal subunit protein bL12 (122 aa).

A disordered region spans residues 94 to 122; the sequence is GNVKEGLSKEDAEEMKEKLEEAGATVELK. Residues 99 to 114 are compositionally biased toward basic and acidic residues; the sequence is GLSKEDAEEMKEKLEE.

The protein belongs to the bacterial ribosomal protein bL12 family. As to quaternary structure, homodimer. Part of the ribosomal stalk of the 50S ribosomal subunit. Forms a multimeric L10(L12)X complex, where L10 forms an elongated spine to which 2 to 4 L12 dimers bind in a sequential fashion. Binds GTP-bound translation factors.

Its function is as follows. Forms part of the ribosomal stalk which helps the ribosome interact with GTP-bound translation factors. Is thus essential for accurate translation. The polypeptide is Large ribosomal subunit protein bL12 (Halanaerobium praevalens).